The primary structure comprises 299 residues: MPASKPLLIALLGPTASGKTCLALQLAEQLKLSVLNVDSRQLYIGMDVGTAKPTKEQQRRVQHHLIDLRRPDQPITLQEFQAAAQLILAQKLREQNMPFLVGGSGLYLKALTCGLRPPAVPPQPELRKQLGELGQRTCHHLLQAADPTAANRISPADAMRTQRGLEVVYATGKPITTQQGSSPPPWRVLELGLDPHNLRERIGHRTTQLYANGLIEETEHLSHCYDTDLPLLQTIGYGEALKVIQGLLNREQAIALTTRRTQQFAKRQRTWFRRQHHPYWLKGEEPLSEALSLIQAGLR.

Residue G13–T20 coordinates ATP. T15–T20 provides a ligand contact to substrate. Residues D38–Q41 form an interaction with substrate tRNA region.

The protein belongs to the IPP transferase family. As to quaternary structure, monomer. Mg(2+) is required as a cofactor.

The catalysed reaction is adenosine(37) in tRNA + dimethylallyl diphosphate = N(6)-dimethylallyladenosine(37) in tRNA + diphosphate. In terms of biological role, catalyzes the transfer of a dimethylallyl group onto the adenine at position 37 in tRNAs that read codons beginning with uridine, leading to the formation of N6-(dimethylallyl)adenosine (i(6)A). In Prochlorococcus marinus (strain MIT 9313), this protein is tRNA dimethylallyltransferase.